A 118-amino-acid chain; its full sequence is Large ribosomal subunit protein bL20 (118 aa).

This sequence belongs to the bacterial ribosomal protein bL20 family.

Its function is as follows. Binds directly to 23S ribosomal RNA and is necessary for the in vitro assembly process of the 50S ribosomal subunit. It is not involved in the protein synthesizing functions of that subunit. This Marinomonas sp. (strain MWYL1) protein is Large ribosomal subunit protein bL20.